Here is a 248-residue protein sequence, read N- to C-terminus: Large ribosomal subunit protein uL30 (248 aa).

The tract at residues 22–42 (KSQEKARAERQAEIEKKKAAN) is disordered. Residues 24 to 42 (QEKARAERQAEIEKKKAAN) are compositionally biased toward basic and acidic residues.

The protein belongs to the universal ribosomal protein uL30 family. In terms of assembly, component of the large ribosomal subunit (LSU). Mature N.crassa ribosomes consist of a small (40S) and a large (60S) subunit. The 40S small subunit contains 1 molecule of ribosomal RNA (18S rRNA) and at least 32 different proteins. The large 60S subunit contains 3 rRNA molecules (26S, 5.8S and 5S rRNA) and at least 42 different proteins.

It localises to the cytoplasm. Its function is as follows. Component of the ribosome, a large ribonucleoprotein complex responsible for the synthesis of proteins in the cell. The small ribosomal subunit (SSU) binds messenger RNAs (mRNAs) and translates the encoded message by selecting cognate aminoacyl-transfer RNA (tRNA) molecules. The large subunit (LSU) contains the ribosomal catalytic site termed the peptidyl transferase center (PTC), which catalyzes the formation of peptide bonds, thereby polymerizing the amino acids delivered by tRNAs into a polypeptide chain. The nascent polypeptides leave the ribosome through a tunnel in the LSU and interact with protein factors that function in enzymatic processing, targeting, and the membrane insertion of nascent chains at the exit of the ribosomal tunnel. In Neurospora crassa (strain ATCC 24698 / 74-OR23-1A / CBS 708.71 / DSM 1257 / FGSC 987), this protein is Large ribosomal subunit protein uL30 (rpl-7).